Reading from the N-terminus, the 284-residue chain is Acetylglutamate kinase (284 aa).

Residues 64 to 65 (GG), Arg86, and Asn181 each bind substrate.

This sequence belongs to the acetylglutamate kinase family. ArgB subfamily.

It is found in the cytoplasm. The catalysed reaction is N-acetyl-L-glutamate + ATP = N-acetyl-L-glutamyl 5-phosphate + ADP. It participates in amino-acid biosynthesis; L-arginine biosynthesis; N(2)-acetyl-L-ornithine from L-glutamate: step 2/4. Catalyzes the ATP-dependent phosphorylation of N-acetyl-L-glutamate. This is Acetylglutamate kinase from Wolinella succinogenes (strain ATCC 29543 / DSM 1740 / CCUG 13145 / JCM 31913 / LMG 7466 / NCTC 11488 / FDC 602W) (Vibrio succinogenes).